The following is a 499-amino-acid chain: Probable cytosol aminopeptidase (499 aa).

Mn(2+) contacts are provided by Lys-264 and Asp-269. The active site involves Lys-276. Mn(2+) contacts are provided by Asp-287, Asp-346, and Glu-348. Residue Arg-350 is part of the active site.

This sequence belongs to the peptidase M17 family. Mn(2+) serves as cofactor.

Its subcellular location is the cytoplasm. It carries out the reaction Release of an N-terminal amino acid, Xaa-|-Yaa-, in which Xaa is preferably Leu, but may be other amino acids including Pro although not Arg or Lys, and Yaa may be Pro. Amino acid amides and methyl esters are also readily hydrolyzed, but rates on arylamides are exceedingly low.. The catalysed reaction is Release of an N-terminal amino acid, preferentially leucine, but not glutamic or aspartic acids.. Presumably involved in the processing and regular turnover of intracellular proteins. Catalyzes the removal of unsubstituted N-terminal amino acids from various peptides. The protein is Probable cytosol aminopeptidase of Rhodopseudomonas palustris (strain BisB18).